Reading from the N-terminus, the 121-residue chain is Immunoglobulin heavy variable 6-1 (121 aa).

The N-terminal stretch at 1 to 20 (MSVSFLIFLPVLGLPWGVLS) is a signal peptide. The tract at residues 21–45 (QVQLQQSGPGLVKPSQTLSLTCAIS) is framework-1. Residues 21–121 (QVQLQQSGPG…EDTAVYYCAR (101 aa)) form the Ig-like domain. A disulfide bridge links C42 with C119. The segment at 46–55 (GDSVSSNSAA) is complementarity-determining-1. A framework-2 region spans residues 56 to 72 (WNWIRQSPSRGLEWLGR). The interval 73–81 (TYYRSKWYN) is complementarity-determining-2. The segment at 82-119 (DYAVSVKSRITINPDTSKNQFSLQLNSVTPEDTAVYYC) is framework-3. The complementarity-determining-3 stretch occupies residues 120–121 (AR).

In terms of assembly, immunoglobulins are composed of two identical heavy chains and two identical light chains; disulfide-linked.

Its subcellular location is the secreted. It localises to the cell membrane. In terms of biological role, v region of the variable domain of immunoglobulin heavy chains that participates in the antigen recognition. Immunoglobulins, also known as antibodies, are membrane-bound or secreted glycoproteins produced by B lymphocytes. In the recognition phase of humoral immunity, the membrane-bound immunoglobulins serve as receptors which, upon binding of a specific antigen, trigger the clonal expansion and differentiation of B lymphocytes into immunoglobulins-secreting plasma cells. Secreted immunoglobulins mediate the effector phase of humoral immunity, which results in the elimination of bound antigens. The antigen binding site is formed by the variable domain of one heavy chain, together with that of its associated light chain. Thus, each immunoglobulin has two antigen binding sites with remarkable affinity for a particular antigen. The variable domains are assembled by a process called V-(D)-J rearrangement and can then be subjected to somatic hypermutations which, after exposure to antigen and selection, allow affinity maturation for a particular antigen. In Homo sapiens (Human), this protein is Immunoglobulin heavy variable 6-1.